We begin with the raw amino-acid sequence, 173 residues long: Ribosome maturation factor RimM (173 aa).

Positions 94–168 constitute a PRC barrel domain; it reads SNESYLCDLL…LIRINPPKGL (75 aa).

This sequence belongs to the RimM family. Binds ribosomal protein uS19.

Its subcellular location is the cytoplasm. Its function is as follows. An accessory protein needed during the final step in the assembly of 30S ribosomal subunit, possibly for assembly of the head region. Essential for efficient processing of 16S rRNA. May be needed both before and after RbfA during the maturation of 16S rRNA. It has affinity for free ribosomal 30S subunits but not for 70S ribosomes. This chain is Ribosome maturation factor RimM, found in Lawsonia intracellularis (strain PHE/MN1-00).